A 799-amino-acid chain; its full sequence is MKAFSCLLSVIATAASLFQHVDARSHARDKLNNISRVERPVIHTPSRRVHAHSHFDLTFDLYPRSSRIKLQLEPNHDVLSHDARVTFLDTEGNVDRTERIERRDHSVFKGWAWTQAKSGAWERVGWARIILHRDGEDPLFEGVFTVMHDHHQVIAKSKYVRKRHQQDPPLDNTPGEYMLLFRGSDIAQTQSTGNVERSIMSSPSCDADTLAYDSNSNFMFPPLPEENNTSIWNYFMTSIGKRQMTDTGGVVPGSRDLKETIGSTSGCPNTRKVALIGVVADCTYTNTFASEMDARADIISVVNAASVVYEHSFNISLTLGEINILPKNCPATASSATPFNQQCDDRAGGGSFTLADRLNTFSAWRGKKTDDFAFWTLMTDCTTENQVGLAWAAQLCVKGVQGNPDSRNSSSQAVAGANVVSKTDNTWQVFAHEAGHIFGAVHDCDSMLCQNPANPDNSRCCPATASTCDARGRFMMNPTSGSQITDFSPCSIGQICSRMARRTILTSCLTTNRGVDTISGQQCGNGIVEDGEDCDCGDEESCKGNTCCDPKTCKYTSGSQCDDANEECCKGCKFASSSTICRTSSGPCDPEEKCSGNSGDCPHDIHSKDGETCGTDLQCASGQCTSRDLQCQMHLGNQVAGSRTVAFDSYGCEVACKDPDRPNVRYEGSLTFLDGTPCGGGGTCKNGQCSGSTFGNEVSDWVSRHKPIVIGVAVGAGCLLLLAIASCICGRSRRQRPRNRKMPPINMRPMAPVYNGWNGAPPNAQQSSPGGHPPYNNIPPPINAPPPAYPGHLPSTRYA.

Positions 1 to 23 are cleaved as a signal peptide; it reads MKAFSCLLSVIATAASLFQHVDA. The Extracellular portion of the chain corresponds to 24–707; the sequence is RSHARDKLNN…VSDWVSRHKP (684 aa). N-linked (GlcNAc...) asparagine glycosylation is found at Asn-33, Asn-227, Asn-228, Asn-314, and Asn-408. The Peptidase M12B domain occupies 272–511; it reads KVALIGVVAD…RTILTSCLTT (240 aa). 3 disulfide bridges follow: Cys-396–Cys-496, Cys-449–Cys-460, and Cys-581–Cys-601. His-432 serves as a coordination point for Zn(2+). The active site involves Glu-433. His-436 and His-442 together coordinate Zn(2+). The 90-residue stretch at 520 to 609 folds into the Disintegrin domain; the sequence is GQQCGNGIVE…DCPHDIHSKD (90 aa). A helical transmembrane segment spans residues 708–728; that stretch reads IVIGVAVGAGCLLLLAIASCI. The Cytoplasmic segment spans residues 729–799; it reads CGRSRRQRPR…PGHLPSTRYA (71 aa). Residues 753-799 form a disordered region; the sequence is VYNGWNGAPPNAQQSSPGGHPPYNNIPPPINAPPPAYPGHLPSTRYA. The span at 776–789 shows a compositional bias: pro residues; that stretch reads NNIPPPINAPPPAY.

Zn(2+) serves as cofactor.

The protein resides in the membrane. In terms of biological role, probable zinc protease. The protein is Disintegrin and metalloproteinase domain-containing protein B (ADM-B) of Arthroderma benhamiae (strain ATCC MYA-4681 / CBS 112371) (Trichophyton mentagrophytes).